The sequence spans 185 residues: Threonylcarbamoyl-AMP synthase (185 aa).

Residues 4 to 185 form the YrdC-like domain; the sequence is DWRVQQVARV…LRSGEVIRPA (182 aa).

Belongs to the SUA5 family. TsaC subfamily.

It localises to the cytoplasm. The enzyme catalyses L-threonine + hydrogencarbonate + ATP = L-threonylcarbamoyladenylate + diphosphate + H2O. Required for the formation of a threonylcarbamoyl group on adenosine at position 37 (t(6)A37) in tRNAs that read codons beginning with adenine. Catalyzes the conversion of L-threonine, HCO(3)(-)/CO(2) and ATP to give threonylcarbamoyl-AMP (TC-AMP) as the acyladenylate intermediate, with the release of diphosphate. The polypeptide is Threonylcarbamoyl-AMP synthase (Stutzerimonas stutzeri (strain A1501) (Pseudomonas stutzeri)).